Consider the following 300-residue polypeptide: 4-hydroxy-tetrahydrodipicolinate synthase (300 aa).

Residue Thr-45 participates in pyruvate binding. Tyr-140 acts as the Proton donor/acceptor in catalysis. The active-site Schiff-base intermediate with substrate is the Lys-169. Ile-210 is a binding site for pyruvate.

Belongs to the DapA family. As to quaternary structure, homotetramer; dimer of dimers.

The protein resides in the cytoplasm. It catalyses the reaction L-aspartate 4-semialdehyde + pyruvate = (2S,4S)-4-hydroxy-2,3,4,5-tetrahydrodipicolinate + H2O + H(+). Its pathway is amino-acid biosynthesis; L-lysine biosynthesis via DAP pathway; (S)-tetrahydrodipicolinate from L-aspartate: step 3/4. Its function is as follows. Catalyzes the condensation of (S)-aspartate-beta-semialdehyde [(S)-ASA] and pyruvate to 4-hydroxy-tetrahydrodipicolinate (HTPA). In Helicobacter pylori (strain P12), this protein is 4-hydroxy-tetrahydrodipicolinate synthase.